The chain runs to 751 residues: Transposable element P transposase (751 aa).

The THAP-type zinc-finger motif lies at 1-77; that stretch reads MKYCKFCCKA…LNADAVPSKV (77 aa).

Functionally, P-element transposase that specifically mediates transposition of P-elements. Mediates both; precise and imprecise excision. This chain is Transposable element P transposase, found in Drosophila melanogaster (Fruit fly).